The following is a 257-amino-acid chain: Probable oxidoreductase yanE (257 aa).

Belongs to the oxidoreductase OpS7 family.

Its pathway is secondary metabolite biosynthesis; terpenoid biosynthesis. In terms of biological role, part of the gene cluster that mediates the biosynthesis of yanuthone D, a fungal isoprenoid epoxycyclohexenone that acts as an antibiotic against fungi and bacteria. The first step of the pathway is the synthesis of 6-methylsalicylic acid (6-MSA) by the polyketide synthase yanA. 6-MSA is then converted to m-cresol by the decarboxylase yanB. The cytochrome P450 monooxygenase yanC then catalyzes the oxidation of m-cresol to toluquinol. Epoxidation of toluquinol is then performed by the short chain dehydrogenase yanD, with the help of yanE, and a further prenylation by yanG leads to 7-deacetoxyyanuthone A. The next step is the hydroxylation of C-22 of 7-deacetoxyyanuthone A by the cytochrome P450 monooxygenase yanH to yield 22-deacetylyanuthone A. O-Mevalon transferase yanI then attaches mevalon to the hydroxyl group of 22-deacetylyanuthone A to produce yanuthone E. Finally, the FAD-dependent monooxygenase yanF oxidizes the hydroxyl group at C15 of yanuthone E to form yanuthone D. Furthermore, several branching points in the pathway lead to the production of yanuthones F and G from 7-deacetoxyyanuthone A; yanuthones H and I from 22-deacetylyanuthone A; and yanuthone J from yanuthone E. YanE is also involved in the synthesis of yanuthone X1 which does not have 6-methylsalicylic acid (6-MSA) as precursor. The sequence is that of Probable oxidoreductase yanE from Aspergillus niger (strain ATCC 1015 / CBS 113.46 / FGSC A1144 / LSHB Ac4 / NCTC 3858a / NRRL 328 / USDA 3528.7).